Consider the following 431-residue polypeptide: Light-independent protochlorophyllide reductase subunit N (431 aa).

[4Fe-4S] cluster-binding residues include cysteine 29, cysteine 54, and cysteine 114.

The protein belongs to the BchN/ChlN family. Protochlorophyllide reductase is composed of three subunits; ChlL, ChlN and ChlB. Forms a heterotetramer of two ChlB and two ChlN subunits. Requires [4Fe-4S] cluster as cofactor.

Its subcellular location is the plastid. The protein resides in the chloroplast. It catalyses the reaction chlorophyllide a + oxidized 2[4Fe-4S]-[ferredoxin] + 2 ADP + 2 phosphate = protochlorophyllide a + reduced 2[4Fe-4S]-[ferredoxin] + 2 ATP + 2 H2O. Its pathway is porphyrin-containing compound metabolism; chlorophyll biosynthesis (light-independent). Component of the dark-operative protochlorophyllide reductase (DPOR) that uses Mg-ATP and reduced ferredoxin to reduce ring D of protochlorophyllide (Pchlide) to form chlorophyllide a (Chlide). This reaction is light-independent. The NB-protein (ChlN-ChlB) is the catalytic component of the complex. This Nephroselmis olivacea (Green alga) protein is Light-independent protochlorophyllide reductase subunit N.